A 169-amino-acid polypeptide reads, in one-letter code: NADH-quinone oxidoreductase subunit B (169 aa).

4 residues coordinate [4Fe-4S] cluster: cysteine 42, cysteine 43, cysteine 107, and cysteine 136.

This sequence belongs to the complex I 20 kDa subunit family. As to quaternary structure, NDH-1 is composed of 14 different subunits. Subunits NuoB, C, D, E, F, and G constitute the peripheral sector of the complex. [4Fe-4S] cluster is required as a cofactor.

Its subcellular location is the cell inner membrane. It catalyses the reaction a quinone + NADH + 5 H(+)(in) = a quinol + NAD(+) + 4 H(+)(out). NDH-1 shuttles electrons from NADH, via FMN and iron-sulfur (Fe-S) centers, to quinones in the respiratory chain. The immediate electron acceptor for the enzyme in this species is believed to be ubiquinone. Couples the redox reaction to proton translocation (for every two electrons transferred, four hydrogen ions are translocated across the cytoplasmic membrane), and thus conserves the redox energy in a proton gradient. The protein is NADH-quinone oxidoreductase subunit B of Nitratiruptor sp. (strain SB155-2).